The sequence spans 247 residues: tRNA pseudouridine synthase A (247 aa).

Aspartate 52 serves as the catalytic Nucleophile. Tyrosine 113 lines the substrate pocket.

This sequence belongs to the tRNA pseudouridine synthase TruA family. As to quaternary structure, homodimer.

It carries out the reaction uridine(38/39/40) in tRNA = pseudouridine(38/39/40) in tRNA. Functionally, formation of pseudouridine at positions 38, 39 and 40 in the anticodon stem and loop of transfer RNAs. This is tRNA pseudouridine synthase A from Bartonella bacilliformis (strain ATCC 35685 / KC583 / Herrer 020/F12,63).